The sequence spans 396 residues: Ribosomal RNA large subunit methyltransferase I (396 aa).

In terms of domain architecture, PUA spans Ser-2 to Arg-81.

This sequence belongs to the methyltransferase superfamily. RlmI family.

It localises to the cytoplasm. The catalysed reaction is cytidine(1962) in 23S rRNA + S-adenosyl-L-methionine = 5-methylcytidine(1962) in 23S rRNA + S-adenosyl-L-homocysteine + H(+). In terms of biological role, specifically methylates the cytosine at position 1962 (m5C1962) of 23S rRNA. This chain is Ribosomal RNA large subunit methyltransferase I, found in Shigella boydii serotype 18 (strain CDC 3083-94 / BS512).